Reading from the N-terminus, the 871-residue chain is Zinc finger and BTB domain-containing protein 10 (871 aa).

Disordered stretches follow at residues methionine 1–arginine 156 and glycine 177–glycine 228. Gly residues predominate over residues arginine 14–serine 26. The span at threonine 27–alanine 37 shows a compositional bias: low complexity. Residues proline 39–glutamine 56 are compositionally biased toward pro residues. The segment covering glutamate 65–aspartate 76 has biased composition (acidic residues). Low complexity predominate over residues leucine 77–proline 103. Arginine 126 is subject to Omega-N-methylarginine. Residues arginine 126–asparagine 135 are compositionally biased toward gly residues. Serine 210 bears the Phosphoserine mark. Lysine 245 is covalently cross-linked (Glycyl lysine isopeptide (Lys-Gly) (interchain with G-Cter in SUMO2)). Residues cysteine 364–serine 433 enclose the BTB domain. Residues lysine 468, lysine 483, and lysine 497 each participate in a glycyl lysine isopeptide (Lys-Gly) (interchain with G-Cter in SUMO2) cross-link. Serine 565 is modified (phosphoserine). Residues lysine 573, lysine 672, lysine 684, lysine 696, and lysine 706 each participate in a glycyl lysine isopeptide (Lys-Gly) (interchain with G-Cter in SUMO2) cross-link. C2H2-type zinc fingers lie at residues leucine 722–histidine 744 and phenylalanine 750–histidine 772. Residues serine 812–aspartate 871 are disordered. Positions arginine 830–asparagine 854 are enriched in acidic residues.

It is found in the nucleus. Its function is as follows. May be involved in transcriptional regulation. The polypeptide is Zinc finger and BTB domain-containing protein 10 (ZBTB10) (Homo sapiens (Human)).